The sequence spans 324 residues: NADH-quinone oxidoreductase subunit H (324 aa).

8 helical membrane passes run 11–31 (ILITVGKAIVILLVVVTCGAF), 81–101 (VIFTLAPMIAFTSMLIAFAIV), 114–134 (IGILFFLMMAGLAVYAVLFAG), 154–174 (VSYEVFIGLSLMGVVAQAGSF), 186–206 (LWNVIPQFFGFITFAIAGVAV), 237–257 (FFVGEYIGIVTVSALMVTLFF), 264–284 (ILPPFVWFALKTGFFMMMFIL), and 304–324 (VCLPITLLNLLATAAVILYNA).

This sequence belongs to the complex I subunit 1 family. In terms of assembly, NDH-1 is composed of 13 different subunits. Subunits NuoA, H, J, K, L, M, N constitute the membrane sector of the complex.

The protein localises to the cell inner membrane. It catalyses the reaction a quinone + NADH + 5 H(+)(in) = a quinol + NAD(+) + 4 H(+)(out). Functionally, NDH-1 shuttles electrons from NADH, via FMN and iron-sulfur (Fe-S) centers, to quinones in the respiratory chain. The immediate electron acceptor for the enzyme in this species is believed to be ubiquinone. Couples the redox reaction to proton translocation (for every two electrons transferred, four hydrogen ions are translocated across the cytoplasmic membrane), and thus conserves the redox energy in a proton gradient. This subunit may bind ubiquinone. The polypeptide is NADH-quinone oxidoreductase subunit H (Pectobacterium carotovorum subsp. carotovorum (strain PC1)).